Reading from the N-terminus, the 670-residue chain is tRNA 5-methylaminomethyl-2-thiouridine biosynthesis bifunctional protein MnmC (670 aa).

The tRNA (mnm(5)s(2)U34)-methyltransferase stretch occupies residues 1-245 (MKPIAIQPAS…KREMLTGALS (245 aa)). Residues 271–670 (VGGGIASALL…RKLLKGRAAS (400 aa)) are FAD-dependent cmnm(5)s(2)U34 oxidoreductase.

In the N-terminal section; belongs to the methyltransferase superfamily. tRNA (mnm(5)s(2)U34)-methyltransferase family. The protein in the C-terminal section; belongs to the DAO family. Requires FAD as cofactor.

The protein localises to the cytoplasm. The enzyme catalyses 5-aminomethyl-2-thiouridine(34) in tRNA + S-adenosyl-L-methionine = 5-methylaminomethyl-2-thiouridine(34) in tRNA + S-adenosyl-L-homocysteine + H(+). In terms of biological role, catalyzes the last two steps in the biosynthesis of 5-methylaminomethyl-2-thiouridine (mnm(5)s(2)U) at the wobble position (U34) in tRNA. Catalyzes the FAD-dependent demodification of cmnm(5)s(2)U34 to nm(5)s(2)U34, followed by the transfer of a methyl group from S-adenosyl-L-methionine to nm(5)s(2)U34, to form mnm(5)s(2)U34. This chain is tRNA 5-methylaminomethyl-2-thiouridine biosynthesis bifunctional protein MnmC, found in Cronobacter sakazakii (strain ATCC BAA-894) (Enterobacter sakazakii).